Here is a 211-residue protein sequence, read N- to C-terminus: ATP phosphoribosyltransferase (211 aa).

It belongs to the ATP phosphoribosyltransferase family. Short subfamily. As to quaternary structure, heteromultimer composed of HisG and HisZ subunits.

Its subcellular location is the cytoplasm. It catalyses the reaction 1-(5-phospho-beta-D-ribosyl)-ATP + diphosphate = 5-phospho-alpha-D-ribose 1-diphosphate + ATP. It functions in the pathway amino-acid biosynthesis; L-histidine biosynthesis; L-histidine from 5-phospho-alpha-D-ribose 1-diphosphate: step 1/9. Functionally, catalyzes the condensation of ATP and 5-phosphoribose 1-diphosphate to form N'-(5'-phosphoribosyl)-ATP (PR-ATP). Has a crucial role in the pathway because the rate of histidine biosynthesis seems to be controlled primarily by regulation of HisG enzymatic activity. The sequence is that of ATP phosphoribosyltransferase from Sorangium cellulosum (strain So ce56) (Polyangium cellulosum (strain So ce56)).